A 2702-amino-acid polypeptide reads, in one-letter code: Serine/threonine-protein kinase ATR (2702 aa).

Positions 1646–2255 (TLARASFRCQ…LWIMAAVSKS (610 aa)) constitute an FAT domain. The region spanning 2366–2678 (IADEAEILSS…GVPLPVEGQA (313 aa)) is the PI3K/PI4K catalytic domain. The tract at residues 2372 to 2378 (ILSSLQR) is G-loop. The catalytic loop stretch occupies residues 2543–2551 (GLGDRHGEN). Residues 2563-2587 (HVDFSCLFDKGLQLEKPELVPFRLT) are activation loop. The 33-residue stretch at 2670 to 2702 (VPLPVEGQARRLIADAVSLENLGKMYIWWMPWF) folds into the FATC domain.

Belongs to the PI3/PI4-kinase family. ATM subfamily.

It is found in the nucleus. The enzyme catalyses L-seryl-[protein] + ATP = O-phospho-L-seryl-[protein] + ADP + H(+). It catalyses the reaction L-threonyl-[protein] + ATP = O-phospho-L-threonyl-[protein] + ADP + H(+). Its function is as follows. Probable serine/threonine kinase. Plays a central role in cell-cycle regulation by transmitting DNA damage signals to downstream effectors of cell-cycle progression. May recognize the substrate consensus sequence [ST]-Q and phosphorylate histone variant H2AX to form H2AXS139ph at sites of DNA damage, thereby regulating DNA damage response mechanism. Seems to be required for the G2-phase checkpoint in response to replication blocks but not absolutely required in the G2-arrest response to double-strand breaks. May also be involved in the meiosis process. Required for the basal expression of RNR1 (ribonucleotide reductase large subunit). Acts in concert with telomerase to maintain telomeric DNA tracts. Not required for telomere length homeostasis. Required for effective immune responses that involve activation of DNA damage responses. This Arabidopsis thaliana (Mouse-ear cress) protein is Serine/threonine-protein kinase ATR (ATR).